The chain runs to 175 residues: Calcineurin subunit B (175 aa).

4 EF-hand domains span residues 21 to 56 (PELM…ANNP), 60 to 88 (RMIA…FSSK), 90 to 125 (GRDE…MVGN), and 131 to 166 (QLQQ…TDIV). Positions 34, 36, 38, 40, 45, 66, 68, 70, 72, 77, 103, 105, 107, 109, 114, 144, 146, 148, 150, and 155 each coordinate Ca(2+).

It belongs to the calcineurin regulatory subunit family. As to quaternary structure, composed of a catalytic subunit (A) and a regulatory subunit (B).

In terms of biological role, regulatory subunit of calcineurin, a calcium-dependent, calmodulin stimulated protein phosphatase. Confers calcium sensitivity. Plays a central role in virulence and antifungal drug action. The protein is Calcineurin subunit B (CNB1) of Cryptococcus neoformans var. neoformans serotype D (strain B-3501A) (Filobasidiella neoformans).